Here is a 649-residue protein sequence, read N- to C-terminus: MTHPNDHIDAMLHETRVIHPSAEFQAGTRVSRAEYERRYRQSLDQPDDFWSEVAHDLHWMKDWDRVLDWQEPHAQWFVGGQTNIAYNALDRNVQRGLGDKRAIIWEGEDGEVRTYTYAELLREVCKAANALEELGVVAGDRVTLYMPLIPEAAIAMLACARIGAVHSIVFGGFSVSALADRINNAQSKLLITADAGYRRGKPVTLKINADEAAKLAPCLEHVLVVKRAGIPLEWWTEGRDLWWHDVVDRQSDQHEATALDSEHPLFILYTSGSTGAPKGVQHTTGGYMVGTYLTTQTVFDLRDDDIYWCTADIGWITGHSYSVYGPLLNGATVVMYEGAPNQPDWGRFWDIVQKHRVTILYTAPTAIRSFMQHGDEIPGRYDLASLRLLGSVGEPINPEAWMWYYRVIGGERCPVVDTWWQTETGSIMLTTLPGAFPSKPGSAGLPMFGVEPALMTRDGEEIGDDDGGLLVIKRPWPSMLRTVYGDDERYRKSYWGEIPHVYFAGDGARRDHDGYYTIVGRVDDVLNVSGHRLGTMEIESALVAHPDVSEAAVVGRPDPVKGESVVAYVLLQDGHTADPAALRAHVSSEIGALARPDAIYIADALPKTRSGKIMRRFLRQLAAGQPVQGDTSTLEDPTVLERLQASPAL.

CoA is bound by residues 198–201 (RRGK), Thr-317, and Asn-341. ATP-binding positions include 393–395 (GEP), 417–422 (DTWWQT), Asp-506, and Arg-521. Residue Ser-529 participates in CoA binding. Residue Arg-532 coordinates ATP. Mg(2+)-binding residues include Val-543, His-545, and Val-548. Position 612 is an N6-acetyllysine (Lys-612). The disordered stretch occupies residues 625 to 649 (QPVQGDTSTLEDPTVLERLQASPAL).

This sequence belongs to the ATP-dependent AMP-binding enzyme family. The cofactor is Mg(2+). In terms of processing, acetylated. Deacetylation by the SIR2-homolog deacetylase activates the enzyme.

It catalyses the reaction acetate + ATP + CoA = acetyl-CoA + AMP + diphosphate. Functionally, catalyzes the conversion of acetate into acetyl-CoA (AcCoA), an essential intermediate at the junction of anabolic and catabolic pathways. AcsA undergoes a two-step reaction. In the first half reaction, AcsA combines acetate with ATP to form acetyl-adenylate (AcAMP) intermediate. In the second half reaction, it can then transfer the acetyl group from AcAMP to the sulfhydryl group of CoA, forming the product AcCoA. The sequence is that of Acetyl-coenzyme A synthetase from Deinococcus radiodurans (strain ATCC 13939 / DSM 20539 / JCM 16871 / CCUG 27074 / LMG 4051 / NBRC 15346 / NCIMB 9279 / VKM B-1422 / R1).